We begin with the raw amino-acid sequence, 218 residues long: MASFEQMRANVGKLLRGIDRYNPENLATLERYVETQAKENAYDLEANLAVLKLYQFNPAFFQTTVTAQVLLKALTNLPHTDFTLCKCMIDQAHQEDRPIRQILYLGDLLETCHFQSFWQALDENLDLIDGVTGFEDSVRKFICHVVGITYQHIDRWLLAEMLGDLSEPQLRVWMSKYGWIESENGKIFVCNQEENIKPKNIVEKIDFDSVSGIMASSQ.

In terms of domain architecture, PCI spans 42 to 204; the sequence is YDLEANLAVL…NIKPKNIVEK (163 aa).

The protein belongs to the eIF-3 subunit K family. Component of the eukaryotic translation initiation factor 3 (eIF-3) complex, which is composed of 13 subunits: eif3a, eif3b, eif3c, eif3d, eif3e, eif3f, eif3g, eif3h, eif3i, eif3j, eif3k, eif3l and eif3m.

The protein resides in the nucleus. Its subcellular location is the cytoplasm. In terms of biological role, component of the eukaryotic translation initiation factor 3 (eIF-3) complex, which is involved in protein synthesis of a specialized repertoire of mRNAs and, together with other initiation factors, stimulates binding of mRNA and methionyl-tRNAi to the 40S ribosome. The eIF-3 complex specifically targets and initiates translation of a subset of mRNAs involved in cell proliferation. This is Eukaryotic translation initiation factor 3 subunit K (eif3k) from Xenopus laevis (African clawed frog).